The following is a 345-amino-acid chain: Meiotic recombination protein rec12 (345 aa).

In terms of domain architecture, Topo IIA-type catalytic spans 5 to 137 (DKKKVVRSWI…LNVEASAKGL (133 aa)). Residue tyrosine 98 is the O-(5'-phospho-DNA)-tyrosine intermediate of the active site. 2 residues coordinate Mg(2+): glutamate 179 and aspartate 229.

This sequence belongs to the TOP6A family. In terms of assembly, component of the DSB catalytic core (DSBC) complex, composed of at least rec12, rec6 and rec14. The complex interacts with mde2. The cofactor is Mg(2+).

It localises to the cytoplasm. Its subcellular location is the nucleus. It catalyses the reaction ATP-dependent breakage, passage and rejoining of double-stranded DNA.. In terms of biological role, required for formation of the double-strand breaks (DSBs) that initiate meiotic recombination. Required for crossover recombination and chiasmatic segregation of chromosomes during meiosis I. Also involved in the faithful equational segregation of chromosomes during meiosis II. This is Meiotic recombination protein rec12 from Schizosaccharomyces pombe (strain 972 / ATCC 24843) (Fission yeast).